The chain runs to 418 residues: Elongation factor 1-gamma 2 (418 aa).

One can recognise a GST N-terminal domain in the interval 1-82; it reads MALVLHAGSG…YVTRSKADNP (82 aa). One can recognise a GST C-terminal domain in the interval 87–215; sequence SLIEYAHIEQ…VKQAESVPPV (129 aa). Residues 210–265 are disordered; that stretch reads ESVPPVQKKAPPPKEQKPKEAKKEAPKEAPKPKAVEKPEEEEEAPKPKPKNPLDLL. The segment covering 221–246 has biased composition (basic and acidic residues); the sequence is PPKEQKPKEAKKEAPKEAPKPKAVEK. An EF-1-gamma C-terminal domain is found at 258-418; the sequence is PKNPLDLLPP…ESLLDAKCFK (161 aa).

EF-1 is composed of four subunits: alpha, beta, delta, and gamma.

Its function is as follows. Probably plays a role in anchoring the complex to other cellular components. The chain is Elongation factor 1-gamma 2 from Oryza sativa subsp. japonica (Rice).